Reading from the N-terminus, the 128-residue chain is Putative transmembrane protein 244 (128 aa).

3 helical membrane passes run 17–37, 65–85, and 93–113; these read FLLC…MGCV, VLLV…VPVV, and AISV…EFPL.

The protein localises to the membrane. The chain is Putative transmembrane protein 244 (TMEM244) from Homo sapiens (Human).